A 453-amino-acid chain; its full sequence is G-protein coupled receptor 39 (453 aa).

Residues 1–34 (MASPSLPGSDCSQIIDHSHVPEFEVATWIKITLI) are Extracellular-facing. 2 disulfides stabilise this stretch: C11-C191 and C108-C210. Positions 17 and 19 each coordinate Zn(2+). The chain crosses the membrane as a helical span at residues 35 to 55 (LVYLIIFVMGLLGNSATIRVT). The Cytoplasmic segment spans residues 56–69 (QVLQKKGYLQKEVT). The chain crosses the membrane as a helical span at residues 70–89 (DHMVSLACSDILVFLIGMPM). The Extracellular segment spans residues 90-109 (EFYSIIWNPLTTSSYTLSCK). Residues 110–131 (LHTFLFEACSYATLLHVLTLSF) traverse the membrane as a helical segment. The Cytoplasmic portion of the chain corresponds to 132–151 (ERYIAICHPFRYKAVSGPCQ). Residues 152–172 (VKLLIGFVWVTSALVALPLLF) form a helical membrane-spanning segment. The Extracellular segment spans residues 173–217 (AMGTEYPLVNVPSHRGLTCNRSSTRHHEQPETSNMSICTNLSSRW). N-linked (GlcNAc...) asparagine glycans are attached at residues N192, N206, and N212. The helical transmembrane segment at 218-242 (TVFQSSIFGAFVVYLVVLLSVAFMC) threads the bilayer. Residues 243-283 (WNMMQVLMKSQKGSLAGGTRPPQLRKSESEESRTARRQTII) lie on the Cytoplasmic side of the membrane. A disordered region spans residues 255–274 (GSLAGGTRPPQLRKSESEES). Residues 284–305 (FLRLIVVTLAVCWMPNQIRRIM) traverse the membrane as a helical segment. Over 306 to 323 (AAAKPKHDWTRSYFRAYM) the chain is Extracellular. The chain crosses the membrane as a helical span at residues 324-344 (ILLPFSETFFYLSSVINPLLY). Topologically, residues 345-453 (TVSSQQFRRV…AENGFQEHEV (109 aa)) are cytoplasmic. A Phosphoserine modification is found at S396. Residues 415 to 453 (SEAEPQSKSQSLSLESLEPNSGAKPANSAAENGFQEHEV) form a disordered region. Positions 418 to 435 (EPQSKSQSLSLESLEPNS) are enriched in low complexity.

Belongs to the G-protein coupled receptor 1 family. Interacts with HTR1A. Interacts with GALR1. In terms of tissue distribution, expressed in many tissues, including the stomach, intestine and hypothalamus.

It is found in the cell membrane. Zinc-sensing receptor that can sense changes in extracellular Zn(2+), mediate Zn(2+) signal transmission, and participates in the regulation of numerous physiological processes including glucose homeostasis regulation, gastrointestinal mobility, hormone secretion and cell death. Activation by Zn(2+) in keratinocytes increases the intracellular concentration of Ca(2+) and activates the ERK/MAPK and PI3K/AKT signaling pathways leading to epithelial repair. Plays an essential role in normal wound healing by inducing the production of cytokines including the major inflammatory cytokine IL6 via the PKC/MAPK/CEBPB pathway. Regulates adipose tissue metabolism, especially lipolysis, and regulates the function of lipases, such as hormone-sensitive lipase and adipose triglyceride lipase. Plays a role in the inhibition of cell death and protects against oxidative, endoplasmic reticulum and mitochondrial stress by inducing secretion of the cytoprotective pigment epithelium-derived growth factor (PEDF) and probably other protective transcripts in a GNA13/RHOA/SRE-dependent manner. Forms dynamic heteroreceptor complexes with HTR1A and GALR1 depending on cell type or specific physiological states, resulting in signaling diversity: HTR1A-GPR39 shows additive increase in signaling along the serum response element (SRE) and NF-kappa-B pathways while GALR1 acts as an antagonist blocking SRE. This chain is G-protein coupled receptor 39 (GPR39), found in Homo sapiens (Human).